Reading from the N-terminus, the 373-residue chain is uncharacterized protein (373 aa).

The WSC domain occupies 15–101 (DFTYLGCYSS…SDSYSVYVDE (87 aa)). Disordered regions lie at residues 101–171 (ESEE…SSLS), 183–210 (FSFS…ITTS), and 291–316 (NLSE…RGAA). 2 stretches are compositionally biased toward low complexity: residues 110-171 (SSAQ…SSLS) and 183-204 (FSFS…SSES).

This is an uncharacterized protein from Pichia angusta (Yeast).